The chain runs to 139 residues: Trafficking protein particle complex subunit 2-like protein (139 aa).

Belongs to the TRAPP small subunits family. Sedlin subfamily.

It localises to the cytoplasm. Its subcellular location is the perinuclear region. The protein resides in the endoplasmic reticulum. It is found in the golgi apparatus. May play a role in vesicular transport from endoplasmic reticulum to Golgi. This chain is Trafficking protein particle complex subunit 2-like protein (trappc2l), found in Xenopus tropicalis (Western clawed frog).